The following is a 285-amino-acid chain: 2-dehydro-3-deoxyphosphooctonate aldolase (285 aa).

It belongs to the KdsA family.

The protein localises to the cytoplasm. The catalysed reaction is D-arabinose 5-phosphate + phosphoenolpyruvate + H2O = 3-deoxy-alpha-D-manno-2-octulosonate-8-phosphate + phosphate. The protein operates within carbohydrate biosynthesis; 3-deoxy-D-manno-octulosonate biosynthesis; 3-deoxy-D-manno-octulosonate from D-ribulose 5-phosphate: step 2/3. It functions in the pathway bacterial outer membrane biogenesis; lipopolysaccharide biosynthesis. This chain is 2-dehydro-3-deoxyphosphooctonate aldolase, found in Methylibium petroleiphilum (strain ATCC BAA-1232 / LMG 22953 / PM1).